The following is a 598-amino-acid chain: Aspartate--tRNA(Asp/Asn) ligase (598 aa).

Glu175 is a binding site for L-aspartate. The tract at residues 199–202 (QQFK) is aspartate. 2 residues coordinate L-aspartate: Arg221 and His452. 221–223 (RDE) provides a ligand contact to ATP. ATP is bound at residue Glu486. Arg493 contacts L-aspartate. 538–541 (GVDR) is a binding site for ATP.

This sequence belongs to the class-II aminoacyl-tRNA synthetase family. Type 1 subfamily. As to quaternary structure, homodimer.

The protein resides in the cytoplasm. The catalysed reaction is tRNA(Asx) + L-aspartate + ATP = L-aspartyl-tRNA(Asx) + AMP + diphosphate. Its function is as follows. Aspartyl-tRNA synthetase with relaxed tRNA specificity since it is able to aspartylate not only its cognate tRNA(Asp) but also tRNA(Asn). Reaction proceeds in two steps: L-aspartate is first activated by ATP to form Asp-AMP and then transferred to the acceptor end of tRNA(Asp/Asn). This chain is Aspartate--tRNA(Asp/Asn) ligase, found in Gluconobacter oxydans (strain 621H) (Gluconobacter suboxydans).